We begin with the raw amino-acid sequence, 380 residues long: Putative S-(hydroxymethyl)glutathione dehydrogenase 2 (380 aa).

Zn(2+) is bound at residue cysteine 50. Histidine 51 contacts NAD(+). The Zn(2+) site is built by histidine 72, glutamate 73, cysteine 102, cysteine 105, cysteine 108, cysteine 116, and cysteine 179. Residues 204 to 209 (GLGSVG), aspartate 228, and 297 to 299 (IGV) each bind NAD(+).

It belongs to the zinc-containing alcohol dehydrogenase family. Class-III subfamily. The cofactor is Zn(2+).

The catalysed reaction is a primary alcohol + NAD(+) = an aldehyde + NADH + H(+). It carries out the reaction a secondary alcohol + NAD(+) = a ketone + NADH + H(+). The enzyme catalyses S-(hydroxymethyl)glutathione + NADP(+) = S-formylglutathione + NADPH + H(+). It catalyses the reaction S-(hydroxymethyl)glutathione + NAD(+) = S-formylglutathione + NADH + H(+). The catalysed reaction is S-nitrosoglutathione + NADH + H(+) = S-(hydroxysulfenamide)glutathione + NAD(+). Functionally, oxidizes long-chain alcohols and, in the presence of glutathione, is able to oxidize formaldehyde. Also acts as a S-nitroso-glutathione reductase by catalyzing the NADH-dependent reduction of S-nitrosoglutathione, thereby regulating protein S-nitrosylation. The polypeptide is Putative S-(hydroxymethyl)glutathione dehydrogenase 2 (Schizosaccharomyces pombe (strain 972 / ATCC 24843) (Fission yeast)).